Here is a 114-residue protein sequence, read N- to C-terminus: Large ribosomal subunit protein bL20 (114 aa).

Belongs to the bacterial ribosomal protein bL20 family.

Binds directly to 23S ribosomal RNA and is necessary for the in vitro assembly process of the 50S ribosomal subunit. It is not involved in the protein synthesizing functions of that subunit. This Anaeromyxobacter sp. (strain Fw109-5) protein is Large ribosomal subunit protein bL20.